We begin with the raw amino-acid sequence, 413 residues long: Eukaryotic initiation factor 4A-10 (413 aa).

A Q motif motif is present at residues 40-68 (DSFDAMGLQENLLRGIYAYGFEKPSAIQQ). Residues 71 to 241 (IVPFCKGLDV…RKFMNKPVRI (171 aa)) form the Helicase ATP-binding domain. An ATP-binding site is contributed by 84 to 91 (AQSGTGKT). The DEAD box motif lies at 189–192 (DEAD). In terms of domain architecture, Helicase C-terminal spans 252-413 (GIKQFYVNVD…ELPANVADLL (162 aa)).

The protein belongs to the DEAD box helicase family. eIF4A subfamily. As to quaternary structure, eIF4F is a multi-subunit complex, the composition of which varies with external and internal environmental conditions. It is composed of at least EIF4A, EIF4E and EIF4G.

It carries out the reaction ATP + H2O = ADP + phosphate + H(+). Functionally, ATP-dependent RNA helicase which is a subunit of the eIF4F complex involved in cap recognition and is required for mRNA binding to ribosome. In the current model of translation initiation, eIF4A unwinds RNA secondary structures in the 5'-UTR of mRNAs which is necessary to allow efficient binding of the small ribosomal subunit, and subsequent scanning for the initiator codon. The polypeptide is Eukaryotic initiation factor 4A-10 (Nicotiana tabacum (Common tobacco)).